The sequence spans 157 residues: Ribosomal RNA large subunit methyltransferase H (157 aa).

S-adenosyl-L-methionine is bound by residues leucine 74, glycine 106, and 125–130; that span reads LGNITF.

The protein belongs to the RNA methyltransferase RlmH family. As to quaternary structure, homodimer.

Its subcellular location is the cytoplasm. It catalyses the reaction pseudouridine(1915) in 23S rRNA + S-adenosyl-L-methionine = N(3)-methylpseudouridine(1915) in 23S rRNA + S-adenosyl-L-homocysteine + H(+). Functionally, specifically methylates the pseudouridine at position 1915 (m3Psi1915) in 23S rRNA. This Lawsonia intracellularis (strain PHE/MN1-00) protein is Ribosomal RNA large subunit methyltransferase H.